The following is a 360-amino-acid chain: Phosphoserine aminotransferase (360 aa).

L-glutamate is bound at residue Arg42. Pyridoxal 5'-phosphate is bound by residues 76–77, Trp102, Thr153, Asp172, and Gln195; that span reads AR. Lys196 bears the N6-(pyridoxal phosphate)lysine mark. 237 to 238 contacts pyridoxal 5'-phosphate; it reads NT.

It belongs to the class-V pyridoxal-phosphate-dependent aminotransferase family. SerC subfamily. As to quaternary structure, homodimer. Pyridoxal 5'-phosphate serves as cofactor.

Its subcellular location is the cytoplasm. It carries out the reaction O-phospho-L-serine + 2-oxoglutarate = 3-phosphooxypyruvate + L-glutamate. The enzyme catalyses 4-(phosphooxy)-L-threonine + 2-oxoglutarate = (R)-3-hydroxy-2-oxo-4-phosphooxybutanoate + L-glutamate. It participates in amino-acid biosynthesis; L-serine biosynthesis; L-serine from 3-phospho-D-glycerate: step 2/3. It functions in the pathway cofactor biosynthesis; pyridoxine 5'-phosphate biosynthesis; pyridoxine 5'-phosphate from D-erythrose 4-phosphate: step 3/5. Catalyzes the reversible conversion of 3-phosphohydroxypyruvate to phosphoserine and of 3-hydroxy-2-oxo-4-phosphonooxybutanoate to phosphohydroxythreonine. The polypeptide is Phosphoserine aminotransferase (Aliivibrio fischeri (strain ATCC 700601 / ES114) (Vibrio fischeri)).